A 261-amino-acid chain; its full sequence is MAHQAHAYHMVDPSPWPLTGAVAALLLTSGLAVWFHFKSLTLLAMGLLLMILTMIQWWRDIIREGTFQGHHTPPVQKGLRYGMILFITSEVFFFLGFFWAFYHSSLAPTPELGGIWPPTGITPLDPFEVPLLNTAVLLASGVTVTWTHHSLMEGKRTEATQALTLTILLGLYFTALQAMEYYEAPFTIADGVYGTTFFVATGFHGLHVIIGSTFLAGCLLRQILYHFTSSHHFGFEAAAWYWHFVDVVWLFLYVSIYWWGS.

Over 1-15 the chain is Mitochondrial matrix; it reads MAHQAHAYHMVDPSP. Residues 16–34 form a helical membrane-spanning segment; the sequence is WPLTGAVAALLLTSGLAVW. Residues 35-40 lie on the Mitochondrial intermembrane side of the membrane; the sequence is FHFKSL. The chain crosses the membrane as a helical span at residues 41-66; it reads TLLAMGLLLMILTMIQWWRDIIREGT. Residues 67–72 lie on the Mitochondrial matrix side of the membrane; sequence FQGHHT. Residues 73-105 form a helical membrane-spanning segment; the sequence is PPVQKGLRYGMILFITSEVFFFLGFFWAFYHSS. Residues 106-128 lie on the Mitochondrial intermembrane side of the membrane; the sequence is LAPTPELGGIWPPTGITPLDPFE. A helical membrane pass occupies residues 129 to 152; the sequence is VPLLNTAVLLASGVTVTWTHHSLM. Residues 153–155 lie on the Mitochondrial matrix side of the membrane; sequence EGK. Residues 156 to 183 traverse the membrane as a helical segment; the sequence is RTEATQALTLTILLGLYFTALQAMEYYE. Over 184-190 the chain is Mitochondrial intermembrane; sequence APFTIAD. A helical transmembrane segment spans residues 191-223; sequence GVYGTTFFVATGFHGLHVIIGSTFLAGCLLRQI. Residues 224–232 are Mitochondrial matrix-facing; the sequence is LYHFTSSHH. The helical transmembrane segment at 233–256 threads the bilayer; sequence FGFEAAAWYWHFVDVVWLFLYVSI. Residues 257–261 lie on the Mitochondrial intermembrane side of the membrane; it reads YWWGS.

Belongs to the cytochrome c oxidase subunit 3 family. In terms of assembly, component of the cytochrome c oxidase (complex IV, CIV), a multisubunit enzyme composed of 14 subunits. The complex is composed of a catalytic core of 3 subunits MT-CO1, MT-CO2 and MT-CO3, encoded in the mitochondrial DNA, and 11 supernumerary subunits COX4I, COX5A, COX5B, COX6A, COX6B, COX6C, COX7A, COX7B, COX7C, COX8 and NDUFA4, which are encoded in the nuclear genome. The complex exists as a monomer or a dimer and forms supercomplexes (SCs) in the inner mitochondrial membrane with NADH-ubiquinone oxidoreductase (complex I, CI) and ubiquinol-cytochrome c oxidoreductase (cytochrome b-c1 complex, complex III, CIII), resulting in different assemblies (supercomplex SCI(1)III(2)IV(1) and megacomplex MCI(2)III(2)IV(2)).

Its subcellular location is the mitochondrion inner membrane. It carries out the reaction 4 Fe(II)-[cytochrome c] + O2 + 8 H(+)(in) = 4 Fe(III)-[cytochrome c] + 2 H2O + 4 H(+)(out). In terms of biological role, component of the cytochrome c oxidase, the last enzyme in the mitochondrial electron transport chain which drives oxidative phosphorylation. The respiratory chain contains 3 multisubunit complexes succinate dehydrogenase (complex II, CII), ubiquinol-cytochrome c oxidoreductase (cytochrome b-c1 complex, complex III, CIII) and cytochrome c oxidase (complex IV, CIV), that cooperate to transfer electrons derived from NADH and succinate to molecular oxygen, creating an electrochemical gradient over the inner membrane that drives transmembrane transport and the ATP synthase. Cytochrome c oxidase is the component of the respiratory chain that catalyzes the reduction of oxygen to water. Electrons originating from reduced cytochrome c in the intermembrane space (IMS) are transferred via the dinuclear copper A center (CU(A)) of subunit 2 and heme A of subunit 1 to the active site in subunit 1, a binuclear center (BNC) formed by heme A3 and copper B (CU(B)). The BNC reduces molecular oxygen to 2 water molecules using 4 electrons from cytochrome c in the IMS and 4 protons from the mitochondrial matrix. This Polypterus ornatipinnis (Ornate bichir) protein is Cytochrome c oxidase subunit 3 (mt-co3).